Reading from the N-terminus, the 219-residue chain is Glutathione S-transferase U19 (219 aa).

The 80-residue stretch at 3 to 82 folds into the GST N-terminal domain; the sequence is NEVILLDFWP…YIDEVWSHKN (80 aa). Glutathione-binding positions include 13–14, 39–40, 53–54, and 66–67; these read SM, NK, KI, and ES. A GST C-terminal domain is found at 88–208; sequence DPYLRAQARF…LPDPEKVTEF (121 aa). At Ser198 the chain carries Phosphoserine.

It belongs to the GST superfamily. Tau family.

It localises to the cytoplasm. The protein resides in the cytosol. It catalyses the reaction RX + glutathione = an S-substituted glutathione + a halide anion + H(+). Functionally, catalyzes the glutathionylation of 12-oxophytodienoate (OPDA). In vitro, possesses glutathione S-transferase activity toward 1-chloro-2,4-dinitrobenzene (CDNB) and benzyl isothiocyanate (BITC), and glutathione peroxidase activity toward cumene hydroperoxide. This Arabidopsis thaliana (Mouse-ear cress) protein is Glutathione S-transferase U19 (GSTU19).